The following is a 1293-amino-acid chain: Period circadian protein homolog 1 (1293 aa).

The tract at residues 1–134 (MSGPLEGADG…SSEQSARART (134 aa)) is disordered. Positions 1-151 (MSGPLEGADG…LRELKLRLPP (151 aa)) are interaction with BTRC. Low complexity-rich tracts occupy residues 48-57 (NSNGSSGNES) and 64-115 (GASQ…ASSE). Residues 116–132 (QDNPSTSGCSSEQSARA) show a composition bias toward polar residues. Thr121 bears the Phosphothreonine; by CSNK1E mark. Residues Ser122 and Ser126 each carry the phosphoserine; by CSNK1E modification. The short motif at 138 to 147 (LMTALRELKL) is the Nuclear export signal 1 element. PAS domains lie at 208–275 (ITSE…PSRL) and 348–414 (YEAP…KILQ). The PAC domain occupies 422-465 (HSPIRFCARNGEYVTMDTSWAGFVHPWSRKVAFVLGRHKVRTAP). The Nuclear export signal 2 motif lies at 489–498 (LSEQIHRLLL). Disordered regions lie at residues 509–544 (LCGV…PAPV) and 647–697 (TKRK…KEPV). 2 stretches are compositionally biased toward low complexity: residues 513–533 (GPLM…SNGG) and 652–661 (ASSSCTASSA). Residues 596–814 (ELEVAPAPDQ…GLDTSSVAPS (219 aa)) form a required for phosphorylation by CSNK1E region. Residues Ser660, Ser662, and Ser703 each carry the phosphoserine modification. Disordered regions lie at residues 748–771 (GLAP…APDA), 808–870 (TSSV…PPAT), 935–1094 (SQAP…SKYF), and 1204–1293 (SVQD…NGTS). Residues 750–768 (APGPAPSPAPSPTVAPDPA) are compositionally biased toward pro residues. Residue Ser814 is modified to Phosphoserine. The Nuclear localization signal signature appears at 823-839 (IPSGRRHHCRSKAKRSR). A compositionally biased stretch (basic residues) spans 826–843 (GRRHHCRSKAKRSRHHQT). Pro residues-rich tracts occupy residues 856-870 (SPVP…PPAT) and 952-962 (PSLPPPPPSPP). Positions 969–982 (LFNSRCSSPLQLNL) are enriched in polar residues. Residues Ser975 and Ser976 each carry the phosphoserine modification. Positions 978-985 (LQLNLLQL) match the Nuclear export signal 3 motif. A compositionally biased stretch (low complexity) spans 1032–1058 (LSGSSDLLELLLQEDSRSGTGSAASGS). The LXXLL motif lies at 1039–1043 (LELLL). The span at 1059–1073 (LGSGLGSGSGSGSHE) shows a compositional bias: gly residues. A compositionally biased stretch (low complexity) spans 1074-1091 (GGSTSASITRSSQSSHTS). Positions 1145-1293 (SRDAASVLKQ…ALPAEENGTS (149 aa)) are CRY binding domain. Residues 1232-1250 (GEGGGVGGGGGGVGGGGGD) show a composition bias toward gly residues. Over residues 1255–1269 (AQTQIGTKGSSSQDS) the composition is skewed to polar residues.

Homodimer. Component of the circadian core oscillator, which includes the CRY proteins, CLOCK or NPAS2, BMAL1 or BMAL2, CSNK1D and/or CSNK1E, TIMELESS, and the PER proteins. Interacts directly with TIMELESS, PER2, PER3, CRY1 and CRY2. Interacts with BMAL1 and CLOCK. Interacts with GPRASP1. Interacts (phosphorylated) with BTRC and FBXW11; the interactions trigger proteasomal degradation. Interacts with NONO and WDR5. Interacts with SFPQ. Interacts with USP2. Interacts with HNF4A. Phosphorylated on serine residues by CSNK1D, CSNK1E and probably also by CSNK1G2. Phosphorylation by CSNK1D or CSNK1E promotes nuclear location of PER proteins as well as ubiquitination and subsequent degradation. May be dephosphorylated by PP1. Post-translationally, ubiquitinated; requires phosphorylation by CSNK1E and interaction with BTRC and FBXW11. Deubiquitinated by USP2. In terms of tissue distribution, expressed in pancreas. In the CNS, highly expressed in the SCN, internal granular layer of granular cells of the olfactory bulb, tuberculum olfactorium, piriform cortex, gyrus dentatus of the hippocampus, cerebellum, pars tuberalis/median eminence, and pituitary, and moderately in the tenia tecta, caudate putamen, accumbens nucleus, spinal cord, superior and inferior colliculus and pineal gland.

It is found in the nucleus. Its subcellular location is the cytoplasm. In terms of biological role, transcriptional repressor which forms a core component of the circadian clock. The circadian clock, an internal time-keeping system, regulates various physiological processes through the generation of approximately 24 hour circadian rhythms in gene expression, which are translated into rhythms in metabolism and behavior. It is derived from the Latin roots 'circa' (about) and 'diem' (day) and acts as an important regulator of a wide array of physiological functions including metabolism, sleep, body temperature, blood pressure, endocrine, immune, cardiovascular, and renal function. Consists of two major components: the central clock, residing in the suprachiasmatic nucleus (SCN) of the brain, and the peripheral clocks that are present in nearly every tissue and organ system. Both the central and peripheral clocks can be reset by environmental cues, also known as Zeitgebers (German for 'timegivers'). The predominant Zeitgeber for the central clock is light, which is sensed by retina and signals directly to the SCN. The central clock entrains the peripheral clocks through neuronal and hormonal signals, body temperature and feeding-related cues, aligning all clocks with the external light/dark cycle. Circadian rhythms allow an organism to achieve temporal homeostasis with its environment at the molecular level by regulating gene expression to create a peak of protein expression once every 24 hours to control when a particular physiological process is most active with respect to the solar day. Transcription and translation of core clock components (CLOCK, NPAS2, BMAL1, BMAL2, PER1, PER2, PER3, CRY1 and CRY2) plays a critical role in rhythm generation, whereas delays imposed by post-translational modifications (PTMs) are important for determining the period (tau) of the rhythms (tau refers to the period of a rhythm and is the length, in time, of one complete cycle). A diurnal rhythm is synchronized with the day/night cycle, while the ultradian and infradian rhythms have a period shorter and longer than 24 hours, respectively. Disruptions in the circadian rhythms contribute to the pathology of cardiovascular diseases, cancer, metabolic syndromes and aging. A transcription/translation feedback loop (TTFL) forms the core of the molecular circadian clock mechanism. Transcription factors, CLOCK or NPAS2 and BMAL1 or BMAL2, form the positive limb of the feedback loop, act in the form of a heterodimer and activate the transcription of core clock genes and clock-controlled genes (involved in key metabolic processes), harboring E-box elements (5'-CACGTG-3') within their promoters. The core clock genes: PER1/2/3 and CRY1/2 which are transcriptional repressors form the negative limb of the feedback loop and interact with the CLOCK|NPAS2-BMAL1|BMAL2 heterodimer inhibiting its activity and thereby negatively regulating their own expression. This heterodimer also activates nuclear receptors NR1D1/2 and RORA/B/G, which form a second feedback loop and which activate and repress BMAL1 transcription, respectively. Regulates circadian target genes expression at post-transcriptional levels, but may not be required for the repression at transcriptional level. Controls PER2 protein decay. Represses CRY2 preventing its repression on CLOCK/BMAL1 target genes such as FXYD5 and SCNN1A in kidney and PPARA in liver. Besides its involvement in the maintenance of the circadian clock, has an important function in the regulation of several processes. Participates in the repression of glucocorticoid receptor NR3C1/GR-induced transcriptional activity by reducing the association of NR3C1/GR to glucocorticoid response elements (GREs) by BMAL1:CLOCK. Plays a role in the modulation of the neuroinflammatory state via the regulation of inflammatory mediators release, such as CCL2 and IL6. In spinal astrocytes, negatively regulates the MAPK14/p38 and MAPK8/JNK MAPK cascades as well as the subsequent activation of NFkappaB. Coordinately regulates the expression of multiple genes that are involved in the regulation of renal sodium reabsorption. Can act as gene expression activator in a gene and tissue specific manner, in kidney enhances WNK1 and SLC12A3 expression in collaboration with CLOCK. Modulates hair follicle cycling. Represses the CLOCK-BMAL1 induced transcription of BHLHE40/DEC1. This chain is Period circadian protein homolog 1, found in Rattus norvegicus (Rat).